The following is a 325-amino-acid chain: ATP phosphoribosyltransferase (325 aa).

This sequence belongs to the ATP phosphoribosyltransferase family. Long subfamily. Requires Mg(2+) as cofactor.

The protein resides in the cytoplasm. It catalyses the reaction 1-(5-phospho-beta-D-ribosyl)-ATP + diphosphate = 5-phospho-alpha-D-ribose 1-diphosphate + ATP. It functions in the pathway amino-acid biosynthesis; L-histidine biosynthesis; L-histidine from 5-phospho-alpha-D-ribose 1-diphosphate: step 1/9. With respect to regulation, feedback inhibited by histidine. Its function is as follows. Catalyzes the condensation of ATP and 5-phosphoribose 1-diphosphate to form N'-(5'-phosphoribosyl)-ATP (PR-ATP). Has a crucial role in the pathway because the rate of histidine biosynthesis seems to be controlled primarily by regulation of HisG enzymatic activity. The protein is ATP phosphoribosyltransferase of Rhodopseudomonas palustris (strain BisB18).